Consider the following 213-residue polypeptide: Uridine kinase (213 aa).

15-22 (GASASGKS) is an ATP binding site.

This sequence belongs to the uridine kinase family.

The protein localises to the cytoplasm. It catalyses the reaction uridine + ATP = UMP + ADP + H(+). The enzyme catalyses cytidine + ATP = CMP + ADP + H(+). It functions in the pathway pyrimidine metabolism; CTP biosynthesis via salvage pathway; CTP from cytidine: step 1/3. The protein operates within pyrimidine metabolism; UMP biosynthesis via salvage pathway; UMP from uridine: step 1/1. This is Uridine kinase from Salmonella newport (strain SL254).